A 320-amino-acid chain; its full sequence is Protein MRH1 (320 aa).

The Extracellular segment spans residues 1–34; sequence MSTFETLIKRGGNEAIKINPPTGADFHITSRGSD. A helical membrane pass occupies residues 35 to 55; the sequence is WFWTCFCCYLLFGLILTFLMF. Topologically, residues 56 to 62 are cytoplasmic; that stretch reads RKPVNDR. Residues 63–83 traverse the membrane as a helical segment; sequence FFYLTGIAPNFFMCIAYFTMA. Over 84 to 116 the chain is Extracellular; that stretch reads SNLGWIPVKAKYNHVQTSTQKEHPGYRQIFYSR. Residues 117 to 137 form a helical membrane-spanning segment; the sequence is FVGWFLALPWPIIQICMLAGT. The Cytoplasmic portion of the chain corresponds to 138–141; that stretch reads PFWQ. Residues 142-162 form a helical membrane-spanning segment; that stretch reads MAFNVCITEFFTVCWLIAACV. Residues 163 to 167 lie on the Extracellular side of the membrane; sequence HSTYK. Residues 168-188 form a helical membrane-spanning segment; the sequence is WGYYTIGLGAAIVVSISVMTT. Residues 189 to 204 lie on the Cytoplasmic side of the membrane; the sequence is SYNLVKQRDNDIRLTF. The helical transmembrane segment at 205–225 threads the bilayer; the sequence is LVFFSIIMFLWIIAYPTCFGI. At 226 to 238 the chain is on the extracellular side; that stretch reads TDGGNVLQPDSAG. The helical transmembrane segment at 239 to 259 threads the bilayer; that stretch reads IFYGIIDLILMCFIPTLLVPI. The Cytoplasmic portion of the chain corresponds to 260-320; sequence ANHFGADKLG…KSKKSKKSEE (61 aa). A disordered region spans residues 285-320; it reads APVASPRPAATPNLSKDKKKKSKKSKKSKKSKKSEE. Position 289 is a phosphoserine (Ser-289). Thr-295 is subject to Phosphothreonine. Residue Ser-299 is modified to Phosphoserine. A compositionally biased stretch (basic residues) spans 301–320; sequence DKKKKSKKSKKSKKSKKSEE.

The protein belongs to the archaeal/bacterial/fungal opsin family.

Its subcellular location is the cell membrane. The protein resides in the mitochondrion. It is found in the bud. This Saccharomyces cerevisiae (strain ATCC 204508 / S288c) (Baker's yeast) protein is Protein MRH1 (MRH1).